A 661-amino-acid polypeptide reads, in one-letter code: DNA-directed RNA polymerase subunit beta' (661 aa).

Residues Cys-69, Cys-71, Cys-87, and Cys-90 each coordinate Zn(2+). Residues Asp-489, Asp-491, and Asp-493 each contribute to the Mg(2+) site.

Belongs to the RNA polymerase beta' chain family. RpoC1 subfamily. As to quaternary structure, in plastids the minimal PEP RNA polymerase catalytic core is composed of four subunits: alpha, beta, beta', and beta''. When a (nuclear-encoded) sigma factor is associated with the core the holoenzyme is formed, which can initiate transcription. Mg(2+) is required as a cofactor. Requires Zn(2+) as cofactor.

The protein resides in the plastid. Its subcellular location is the chloroplast. The catalysed reaction is RNA(n) + a ribonucleoside 5'-triphosphate = RNA(n+1) + diphosphate. DNA-dependent RNA polymerase catalyzes the transcription of DNA into RNA using the four ribonucleoside triphosphates as substrates. The sequence is that of DNA-directed RNA polymerase subunit beta' from Chaetosphaeridium globosum (Charophycean green alga).